Consider the following 482-residue polypeptide: tRNA sulfurtransferase (482 aa).

The THUMP domain occupies 61–165; it reads LTIRDALTRI…DDRLLLIKGR (105 aa). ATP is bound by residues 183–184, K265, G287, and Q296; that span reads LI. C344 and C456 are oxidised to a cystine. Positions 404 to 482 constitute a Rhodanese domain; sequence FGPNDVILDI…GFKNVKVYRP (79 aa). Residue C456 is the Cysteine persulfide intermediate of the active site.

It belongs to the ThiI family. In terms of assembly, interacts with IscS.

It localises to the cytoplasm. The enzyme catalyses [ThiI sulfur-carrier protein]-S-sulfanyl-L-cysteine + a uridine in tRNA + 2 reduced [2Fe-2S]-[ferredoxin] + ATP + H(+) = [ThiI sulfur-carrier protein]-L-cysteine + a 4-thiouridine in tRNA + 2 oxidized [2Fe-2S]-[ferredoxin] + AMP + diphosphate. The catalysed reaction is [ThiS sulfur-carrier protein]-C-terminal Gly-Gly-AMP + S-sulfanyl-L-cysteinyl-[cysteine desulfurase] + AH2 = [ThiS sulfur-carrier protein]-C-terminal-Gly-aminoethanethioate + L-cysteinyl-[cysteine desulfurase] + A + AMP + 2 H(+). It functions in the pathway cofactor biosynthesis; thiamine diphosphate biosynthesis. Catalyzes the ATP-dependent transfer of a sulfur to tRNA to produce 4-thiouridine in position 8 of tRNAs, which functions as a near-UV photosensor. Also catalyzes the transfer of sulfur to the sulfur carrier protein ThiS, forming ThiS-thiocarboxylate. This is a step in the synthesis of thiazole, in the thiamine biosynthesis pathway. The sulfur is donated as persulfide by IscS. The protein is tRNA sulfurtransferase of Escherichia coli O157:H7.